The chain runs to 182 residues: Crossover junction endodeoxyribonuclease RuvC (182 aa).

Catalysis depends on residues Asp7, Glu67, and Asp139. Mg(2+)-binding residues include Asp7, Glu67, and Asp139.

It belongs to the RuvC family. As to quaternary structure, homodimer which binds Holliday junction (HJ) DNA. The HJ becomes 2-fold symmetrical on binding to RuvC with unstacked arms; it has a different conformation from HJ DNA in complex with RuvA. In the full resolvosome a probable DNA-RuvA(4)-RuvB(12)-RuvC(2) complex forms which resolves the HJ. Mg(2+) is required as a cofactor.

It is found in the cytoplasm. The enzyme catalyses Endonucleolytic cleavage at a junction such as a reciprocal single-stranded crossover between two homologous DNA duplexes (Holliday junction).. Functionally, the RuvA-RuvB-RuvC complex processes Holliday junction (HJ) DNA during genetic recombination and DNA repair. Endonuclease that resolves HJ intermediates. Cleaves cruciform DNA by making single-stranded nicks across the HJ at symmetrical positions within the homologous arms, yielding a 5'-phosphate and a 3'-hydroxyl group; requires a central core of homology in the junction. The consensus cleavage sequence is 5'-(A/T)TT(C/G)-3'. Cleavage occurs on the 3'-side of the TT dinucleotide at the point of strand exchange. HJ branch migration catalyzed by RuvA-RuvB allows RuvC to scan DNA until it finds its consensus sequence, where it cleaves and resolves the cruciform DNA. This is Crossover junction endodeoxyribonuclease RuvC from Bordetella petrii (strain ATCC BAA-461 / DSM 12804 / CCUG 43448).